Reading from the N-terminus, the 502-residue chain is Probable cytosol aminopeptidase 2 (502 aa).

Positions 269 and 274 each coordinate Mn(2+). Lys281 is an active-site residue. Mn(2+) contacts are provided by Asp292, Asp351, and Glu353. Residue Arg355 is part of the active site.

The protein belongs to the peptidase M17 family. The cofactor is Mn(2+).

It localises to the cytoplasm. It catalyses the reaction Release of an N-terminal amino acid, Xaa-|-Yaa-, in which Xaa is preferably Leu, but may be other amino acids including Pro although not Arg or Lys, and Yaa may be Pro. Amino acid amides and methyl esters are also readily hydrolyzed, but rates on arylamides are exceedingly low.. The enzyme catalyses Release of an N-terminal amino acid, preferentially leucine, but not glutamic or aspartic acids.. Presumably involved in the processing and regular turnover of intracellular proteins. Catalyzes the removal of unsubstituted N-terminal amino acids from various peptides. The protein is Probable cytosol aminopeptidase 2 (pepA2) of Shewanella oneidensis (strain ATCC 700550 / JCM 31522 / CIP 106686 / LMG 19005 / NCIMB 14063 / MR-1).